We begin with the raw amino-acid sequence, 196 residues long: UPF0056 membrane protein BU449 (196 aa).

The next 6 membrane-spanning stretches (helical) occupy residues 8 to 28 (TILL…MTIL), 45 to 65 (IIAL…LIIL), 71 to 91 (TVSI…IFPS), 105 to 125 (FLVP…TLML), 134 to 154 (MFYL…ILLS), and 174 to 194 (MGLV…RAWF).

This sequence belongs to the UPF0056 (MarC) family.

It is found in the cell membrane. The polypeptide is UPF0056 membrane protein BU449 (Buchnera aphidicola subsp. Acyrthosiphon pisum (strain APS) (Acyrthosiphon pisum symbiotic bacterium)).